The primary structure comprises 481 residues: Tryptophan--tRNA ligase, cytoplasmic (481 aa).

Residues 12–68 (SPLELFNSIATQGELVRSLKAGNAPKDEIDSAVKMLLSLKMSYKAAMGEEYKAGCPP) enclose the WHEP-TRS domain. Residue Lys158 is modified to N6-succinyllysine. The 'HIGH' region motif lies at 168–177 (PSSEAMHLGH). The 'KMSKS' region motif lies at 353 to 357 (KMSAS). Ser355 is subject to Phosphoserine.

It belongs to the class-I aminoacyl-tRNA synthetase family. Homodimer. Interacts with oxidized form of GAPDH. Proteolytic cleavage generates 2 forms; T1-TrpRS and T2-TrpRS. As to expression, isoform 2 is widely expressed, isoform 1 is found only in embryonic stem cells.

The protein localises to the cytoplasm. It carries out the reaction tRNA(Trp) + L-tryptophan + ATP = L-tryptophyl-tRNA(Trp) + AMP + diphosphate + H(+). Catalyzes the attachment of tryptophan to tRNA(Trp) in a two-step reaction: tryptophan is first activated by ATP to form Trp-AMP and then transferred to the acceptor end of the tRNA(Trp). Could also possess an angiostatic activity. The chain is Tryptophan--tRNA ligase, cytoplasmic from Mus musculus (Mouse).